We begin with the raw amino-acid sequence, 1537 residues long: Isocyanide synthase-NRPS hybrid crmA (1537 aa).

Residues 1 to 502 form an isocyanide synthase domain region; that stretch reads MFHKEAGISH…CVKAGYAALF (502 aa). A disordered region spans residues 351 to 391; it reads PSVPVSPGMSSPSAASTSSSGASMQGSAATTPETHSPPTFT. The segment covering 352–381 has biased composition (low complexity); it reads SVPVSPGMSSPSAASTSSSGASMQGSAATT. Polar residues predominate over residues 382–391; that stretch reads PETHSPPTFT. The interval 573-752 is adenylation; sequence EAINDPFCFL…GNLIPPREDW (180 aa). In terms of domain architecture, Carrier spans 941 to 1019; sequence SSAHSIEDNV…RLSAIIALLA (79 aa). Ser-977 bears the O-(pantetheine 4'-phosphoryl)serine mark. The interval 1293 to 1526 is transferase; it reads RCLKTTMFLV…LEMLVTDEEF (234 aa).

The protein in the N-terminal section; belongs to the isocyanide synthase family. In the C-terminal section; belongs to the NRP synthetase family.

The protein operates within secondary metabolite biosynthesis. Its function is as follows. Isocyanide synthase-NRPS hybrid; part of the crm gene cluster that mediates the biosynthesis of a yet unidentified copper-responsive metabolite. Converts valine into valine isocyanide that then contributes to two distinct biosynthetic pathways under copper-limiting conditions. Reaction of valine isocyanide with the imine intermediate of festuclavine results in formation of the amide bond in fumivaline A. In addition, valine isocyanide contributes to biosynthesis of a family of acylated sugar alcohols, the D-mannitol-derived fumicicolins. CrmA and associated products inhibit microbial growth from copper-starved A.fumigatus. The sequence is that of Isocyanide synthase-NRPS hybrid crmA from Aspergillus fumigatus (strain ATCC MYA-4609 / CBS 101355 / FGSC A1100 / Af293) (Neosartorya fumigata).